A 63-amino-acid chain; its full sequence is Large ribosomal subunit protein uL29 (63 aa).

The protein belongs to the universal ribosomal protein uL29 family.

The polypeptide is Large ribosomal subunit protein uL29 (Mannheimia succiniciproducens (strain KCTC 0769BP / MBEL55E)).